The chain runs to 80 residues: Transcription elongation factor 1 homolog (80 aa).

Residues C25, C28, C49, and C52 each contribute to the Zn(2+) site.

The protein belongs to the ELOF1 family.

It is found in the nucleus. Its function is as follows. Transcription elongation factor implicated in the maintenance of proper chromatin structure in actively transcribed regions. This is Transcription elongation factor 1 homolog from Encephalitozoon cuniculi (strain GB-M1) (Microsporidian parasite).